A 364-amino-acid polypeptide reads, in one-letter code: Aminomethyltransferase (364 aa).

The protein belongs to the GcvT family. As to quaternary structure, the glycine cleavage system is composed of four proteins: P, T, L and H.

It carries out the reaction N(6)-[(R)-S(8)-aminomethyldihydrolipoyl]-L-lysyl-[protein] + (6S)-5,6,7,8-tetrahydrofolate = N(6)-[(R)-dihydrolipoyl]-L-lysyl-[protein] + (6R)-5,10-methylene-5,6,7,8-tetrahydrofolate + NH4(+). The glycine cleavage system catalyzes the degradation of glycine. In Bacillus licheniformis (strain ATCC 14580 / DSM 13 / JCM 2505 / CCUG 7422 / NBRC 12200 / NCIMB 9375 / NCTC 10341 / NRRL NRS-1264 / Gibson 46), this protein is Aminomethyltransferase.